A 427-amino-acid chain; its full sequence is Trigger factor (427 aa).

The PPIase FKBP-type domain occupies 163–248 (GDTVVIDFVG…IHEVKTKEVP (86 aa)).

Belongs to the FKBP-type PPIase family. Tig subfamily.

Its subcellular location is the cytoplasm. It carries out the reaction [protein]-peptidylproline (omega=180) = [protein]-peptidylproline (omega=0). Its function is as follows. Involved in protein export. Acts as a chaperone by maintaining the newly synthesized protein in an open conformation. Functions as a peptidyl-prolyl cis-trans isomerase. The sequence is that of Trigger factor from Streptococcus agalactiae serotype V (strain ATCC BAA-611 / 2603 V/R).